A 210-amino-acid polypeptide reads, in one-letter code: Thymidylate kinase (210 aa).

Residue 10-17 participates in ATP binding; it reads GPEGAGKS.

Belongs to the thymidylate kinase family.

The catalysed reaction is dTMP + ATP = dTDP + ADP. Functionally, phosphorylation of dTMP to form dTDP in both de novo and salvage pathways of dTTP synthesis. The chain is Thymidylate kinase from Pseudomonas putida (strain ATCC 700007 / DSM 6899 / JCM 31910 / BCRC 17059 / LMG 24140 / F1).